A 243-amino-acid polypeptide reads, in one-letter code: Small ribosomal subunit protein uS3 (243 aa).

An N-acetylalanine modification is found at Ala-2. A phosphoserine mark is found at Ser-6 and Ser-35. The KH type-2 domain occupies 21 to 92; sequence LNEFLTRELA…SVELYAEKVA (72 aa). Thr-42 is subject to Phosphothreonine. The residue at position 62 (Lys-62) is an N6-acetyllysine. An asymmetric dimethylarginine mark is found at Arg-64, Arg-65, and Arg-67. Thr-70 bears the Phosphothreonine mark. Residue Lys-90 forms a Glycyl lysine isopeptide (Lys-Gly) (interchain with G-Cter in ubiquitin) linkage. Ser-104 carries the phosphoserine modification. An N6-succinyllysine modification is found at Lys-132. The tract at residues 200 to 243 is disordered; it reads PKKPLPDHVSIVEPKDEILPTTPISEQKGGKPEPPAMPQPVPTA. Residue Lys-202 forms a Glycyl lysine isopeptide (Lys-Gly) (interchain with G-Cter in ubiquitin) linkage. Ser-209 carries the phosphoserine modification. Lys-214 participates in a covalent cross-link: Glycyl lysine isopeptide (Lys-Gly) (interchain with G-Cter in SUMO2); alternate. Residue Lys-214 forms a Glycyl lysine isopeptide (Lys-Gly) (interchain with G-Cter in ubiquitin); alternate linkage. A phosphothreonine mark is found at Thr-220 and Thr-221. Position 224 is a phosphoserine (Ser-224). A Glycyl lysine isopeptide (Lys-Gly) (interchain with G-Cter in SUMO2) cross-link involves residue Lys-230. Residues 231–243 are compositionally biased toward pro residues; the sequence is PEPPAMPQPVPTA. Thr-242 bears the Phosphothreonine mark.

This sequence belongs to the universal ribosomal protein uS3 family. As to quaternary structure, component of the 40S small ribosomal subunit. Identified in a IGF2BP1-dependent mRNP granule complex containing untranslated mRNAs. Interacts with HNRPD. Interacts with PRMT1; the interaction methylates RPS3. Interacts with SUMO1; the interaction sumoylates RPS3. Interacts with UBC9. Interacts with CDK1; the interaction phosphorylates RPS3. Interacts with PRKCD; the interaction phosphorylates RPS3. Interacts with PKB/AKT; the interaction phosphorylates RPS3. Interacts with E2F1; the interaction occurs in the absence of nerve growth factor and increases transcription of pro-apoptotic proteins BCL2L11/BIM and HRK/Dp5. Interacts with the base excision repair proteins APEX1 and OGG1; interaction with OGG1 increases OGG1 N-glycosylase activity. Interacts with UNG; the interaction increases the uracil excision activity of UNG1. Interacts with HSP90; the interaction prevents the ubiquitination and proteasome-dependent degradation of RPS3 and is suppressed by increased ROS levels. Interacts with TOM70; the interaction promotes translocation of RPS3 to the mitochondrion. Interacts (via N-terminus) with RELA (via N-terminus); the interaction enhances the DNA-binding activity of the NF-kappa-B p65-p50 complex. Interacts with NFKBIA; the interaction is direct and may bridge the interaction between RPS3 and RELA. Interacts with IKKB; the interaction phosphorylates RPS3 and enhances its translocation to the nucleus. Interacts (via KH domain) with MDM2 and TP53. Interacts with TRADD. Interacts with ASCC3. Identified in a HCV IRES-mediated translation complex, at least composed of EIF3C, IGF2BP1, RPS3 and HCV RNA-replicon. Interacts with CRY1. Post-translationally, methylation by PRMT1 is required for import into the nucleolus and for ribosome assembly. In terms of processing, sumoylation by SUMO1 enhances protein stability through increased resistance to proteolysis. Sumoylation occurs at one or more of the three consensus sites, Lys-18, Lys-214 and Lys-230. Phosphorylation at Thr-221 by CDK1 occurs mainly in G2/M phase. Phosphorylation by PRKCD occurs on a non-ribosomal-associated form which results in translocation of RPS3 to the nucleus and enhances its endonuclease activity. Phosphorylated on Ser-209 by IKKB in response to activation of the NF-kappa-B p65-p50 complex which enhances the association of RPS3 with importin-alpha and mediates the nuclear translocation of RPS3. Phosphorylation by MAPK is required for translocation to the nucleus following exposure of cells to DNA damaging agents such as hydrogen peroxide. Phosphorylation by PKB/AKT mediates RPS3 nuclear translocation, enhances RPS3 endonuclease activity and suppresses RPS3-induced neuronal apoptosis. Post-translationally, ubiquitinated; ubiquitination is prevented by interaction with HSP90 which stabilizes the protein. Monoubiquitinated at Lys-214 by RNF10 and ZNF598 when a ribosome has stalled during translation of poly(A) sequences, leading to preclude synthesis of a long poly-lysine tail and initiate the ribosome quality control (RQC) pathway to degrade the potentially detrimental aberrant nascent polypeptide. Deubiquitinated at Lys-214 by USP10, preventing degradation by the proteasome and promoting 40S ribosome subunit recycling following ribosome dissociation. In terms of processing, ufmylated by UFL1.

It is found in the cytoplasm. It localises to the nucleus. The protein resides in the nucleolus. The protein localises to the mitochondrion inner membrane. Its subcellular location is the cytoskeleton. It is found in the spindle. The enzyme catalyses 2'-deoxyribonucleotide-(2'-deoxyribose 5'-phosphate)-2'-deoxyribonucleotide-DNA = a 3'-end 2'-deoxyribonucleotide-(2,3-dehydro-2,3-deoxyribose 5'-phosphate)-DNA + a 5'-end 5'-phospho-2'-deoxyribonucleoside-DNA + H(+). Its activity is regulated as follows. Endonuclease activity is inhibited by MgCl2 on apurinic/apyrimidinic DNA but not on UV-irradiated DNA. Component of the small ribosomal subunit. The ribosome is a large ribonucleoprotein complex responsible for the synthesis of proteins in the cell. Has endonuclease activity and plays a role in repair of damaged DNA. Cleaves phosphodiester bonds of DNAs containing altered bases with broad specificity and cleaves supercoiled DNA more efficiently than relaxed DNA. Displays high binding affinity for 7,8-dihydro-8-oxoguanine (8-oxoG), a common DNA lesion caused by reactive oxygen species (ROS). Has also been shown to bind with similar affinity to intact and damaged DNA. Stimulates the N-glycosylase activity of the base excision protein OGG1. Enhances the uracil excision activity of UNG1. Also stimulates the cleavage of the phosphodiester backbone by APEX1. When located in the mitochondrion, reduces cellular ROS levels and mitochondrial DNA damage. Has also been shown to negatively regulate DNA repair in cells exposed to hydrogen peroxide. Plays a role in regulating transcription as part of the NF-kappa-B p65-p50 complex where it binds to the RELA/p65 subunit, enhances binding of the complex to DNA and promotes transcription of target genes. Represses its own translation by binding to its cognate mRNA. Binds to and protects TP53/p53 from MDM2-mediated ubiquitination. Involved in spindle formation and chromosome movement during mitosis by regulating microtubule polymerization. Involved in induction of apoptosis through its role in activation of CASP8. Induces neuronal apoptosis by interacting with the E2F1 transcription factor and acting synergistically with it to up-regulate pro-apoptotic proteins BCL2L11/BIM and HRK/Dp5. Interacts with TRADD following exposure to UV radiation and induces apoptosis by caspase-dependent JNK activation. This Oryctolagus cuniculus (Rabbit) protein is Small ribosomal subunit protein uS3 (RPS3).